The sequence spans 138 residues: Iron sulfur cluster assembly protein 1 (138 aa).

Belongs to the NifU family. Component of the core Fe-S cluster (ISC) assembly machinery. [2Fe-2S] cluster is required as a cofactor.

It localises to the cytoplasm. Its pathway is cofactor biosynthesis; iron-sulfur cluster biosynthesis. In terms of biological role, scaffold protein for the de novo synthesis of iron-sulfur (Fe-S) clusters within mitosomes, which is required for maturation of both [2Fe-2S] and [4Fe-4S] proteins. First, a [2Fe-2S] cluster is transiently assembled on the scaffold protein ISU1. In a second step, the cluster is released from ISU1, transferred to a glutaredoxin, followed by the formation of [2Fe-2S] proteins, the synthesis of [4Fe-4S] clusters and their target-specific insertion into the recipient apoproteins. Cluster assembly on ISU1 depends on the function of the cysteine desulfurase complex NFS1-ISD11, which serves as the sulfur donor for cluster synthesis, the iron-binding protein frataxin as the putative iron donor, and the electron transfer chain comprised of ferredoxin reductase and ferredoxin, which receive their electrons from NADH. The chain is Iron sulfur cluster assembly protein 1 (ISU1) from Trachipleistophora hominis (Microsporidian parasite).